Consider the following 287-residue polypeptide: Pantothenate synthetase (287 aa).

30 to 37 (MGALHSGH) is a binding site for ATP. Catalysis depends on histidine 37, which acts as the Proton donor. Position 61 (glutamine 61) interacts with (R)-pantoate. Residue glutamine 61 coordinates beta-alanine. 152–155 (GQKD) serves as a coordination point for ATP. Glutamine 158 is a binding site for (R)-pantoate. ATP contacts are provided by residues isoleucine 181 and 189 to 192 (ESSR).

This sequence belongs to the pantothenate synthetase family. As to quaternary structure, homodimer.

The protein localises to the cytoplasm. The enzyme catalyses (R)-pantoate + beta-alanine + ATP = (R)-pantothenate + AMP + diphosphate + H(+). Its pathway is cofactor biosynthesis; (R)-pantothenate biosynthesis; (R)-pantothenate from (R)-pantoate and beta-alanine: step 1/1. Its function is as follows. Catalyzes the condensation of pantoate with beta-alanine in an ATP-dependent reaction via a pantoyl-adenylate intermediate. The chain is Pantothenate synthetase from Corynebacterium efficiens (strain DSM 44549 / YS-314 / AJ 12310 / JCM 11189 / NBRC 100395).